The following is a 610-amino-acid chain: Elongation factor 4 (610 aa).

In terms of domain architecture, tr-type G spans 11-193 (EKIRNFSIIA…QIVEKVPAPT (183 aa)). Residues 23 to 28 (DHGKST) and 140 to 143 (NKID) contribute to the GTP site.

It belongs to the TRAFAC class translation factor GTPase superfamily. Classic translation factor GTPase family. LepA subfamily.

Its subcellular location is the cell membrane. The catalysed reaction is GTP + H2O = GDP + phosphate + H(+). Required for accurate and efficient protein synthesis under certain stress conditions. May act as a fidelity factor of the translation reaction, by catalyzing a one-codon backward translocation of tRNAs on improperly translocated ribosomes. Back-translocation proceeds from a post-translocation (POST) complex to a pre-translocation (PRE) complex, thus giving elongation factor G a second chance to translocate the tRNAs correctly. Binds to ribosomes in a GTP-dependent manner. In Streptococcus pyogenes serotype M1, this protein is Elongation factor 4.